A 156-amino-acid polypeptide reads, in one-letter code: MKLHIVAVGHKMPGWIATGFDEYAKRMPPELRIELREVKPELRSGSRTADSVMAAERQRIEAALPKNARVVALDERGRDWTTMQLAQALPAWQQDGRDVAFVIGGADGLDPQLKSRAELLLRVSSLTLPHGMVRVLLAEQLYRAWSITQNHPYHRA.

Residues Leu-73, Gly-104, and 123–128 (VSSLTL) each bind S-adenosyl-L-methionine.

Belongs to the RNA methyltransferase RlmH family. As to quaternary structure, homodimer.

The protein resides in the cytoplasm. The enzyme catalyses pseudouridine(1915) in 23S rRNA + S-adenosyl-L-methionine = N(3)-methylpseudouridine(1915) in 23S rRNA + S-adenosyl-L-homocysteine + H(+). Specifically methylates the pseudouridine at position 1915 (m3Psi1915) in 23S rRNA. The sequence is that of Ribosomal RNA large subunit methyltransferase H from Burkholderia thailandensis (strain ATCC 700388 / DSM 13276 / CCUG 48851 / CIP 106301 / E264).